A 223-amino-acid chain; its full sequence is Bone marrow proteoglycan (223 aa).

The first 16 residues, 1–16 (MKFPLLLALLVGGASA), serve as a signal peptide directing secretion. The propeptide at 17–106 (LHLSSETSDS…TSLMGDSGCK (90 aa)) is acidic. The segment at 20 to 81 (SSETSDSKSP…PGDEGAVSGQ (62 aa)) is disordered. Residue Thr-23 is glycosylated (O-linked (GalNAc...) threonine; partial). Ser-24 is a glycosylation site (O-linked (GalNAc...) serine). The O-linked (Xyl...) (chondroitin sulfate) serine glycan is linked to Ser-66. Positions 124-223 (SVCRRCYRGT…VKRRPFICSY (100 aa)) constitute a C-type lectin domain. 2 disulfides stabilise this stretch: Cys-126/Cys-221 and Cys-198/Cys-213.

Nitrated.

The protein localises to the secreted. Its function is as follows. Cytotoxin and helminthotoxin. MBP also induces non-cytolytic histamine release from basophils. It is involved in antiparasitic defense mechanisms and immune hypersensitivity reactions. This is Bone marrow proteoglycan (Prg2) from Mus musculus (Mouse).